The sequence spans 340 residues: Dihydroorotate dehydrogenase (quinone) (340 aa).

FMN is bound by residues 61–65 (AGLDK) and Thr-85. A substrate-binding site is contributed by Lys-65. 110–114 (NRMGF) lines the substrate pocket. FMN contacts are provided by Asn-138 and Asn-171. Asn-171 provides a ligand contact to substrate. Ser-174 functions as the Nucleophile in the catalytic mechanism. A substrate-binding site is contributed by Asn-176. 2 residues coordinate FMN: Lys-216 and Thr-244. 245–246 (NT) contacts substrate. FMN-binding positions include Gly-267, Gly-296, and 317 to 318 (YT).

This sequence belongs to the dihydroorotate dehydrogenase family. Type 2 subfamily. As to quaternary structure, monomer. FMN is required as a cofactor.

The protein resides in the cell membrane. It catalyses the reaction (S)-dihydroorotate + a quinone = orotate + a quinol. It participates in pyrimidine metabolism; UMP biosynthesis via de novo pathway; orotate from (S)-dihydroorotate (quinone route): step 1/1. Functionally, catalyzes the conversion of dihydroorotate to orotate with quinone as electron acceptor. This chain is Dihydroorotate dehydrogenase (quinone), found in Marinobacter nauticus (strain ATCC 700491 / DSM 11845 / VT8) (Marinobacter aquaeolei).